Consider the following 146-residue polypeptide: Hut operon positive regulatory protein (146 aa).

This sequence belongs to the HutP family. Homohexamer.

Functionally, antiterminator that binds to cis-acting regulatory sequences on the mRNA in the presence of histidine, thereby suppressing transcription termination and activating the hut operon for histidine utilization. The polypeptide is Hut operon positive regulatory protein (Bacillus cereus (strain G9842)).